A 492-amino-acid polypeptide reads, in one-letter code: Catalase isozyme 1 (492 aa).

Residues histidine 65 and asparagine 138 contribute to the active site. Tyrosine 348 contributes to the heme binding site.

The protein belongs to the catalase family. As to quaternary structure, homotetramer. Heme is required as a cofactor. As to expression, high expression in seeds and early seedlings.

The protein resides in the glyoxysome. The enzyme catalyses 2 H2O2 = O2 + 2 H2O. Its function is as follows. Occurs in almost all aerobically respiring organisms and serves to protect cells from the toxic effects of hydrogen peroxide. The sequence is that of Catalase isozyme 1 (CAT1) from Cucurbita pepo (Vegetable marrow).